Reading from the N-terminus, the 224-residue chain is Elongation factor 1-beta (224 aa).

It belongs to the EF-1-beta/EF-1-delta family. EF-1 is composed of 4 subunits: alpha, beta (1B-alpha=beta'), delta (1B-beta), and gamma (1B-gamma).

Its function is as follows. EF-1-beta and EF-1-beta' stimulate the exchange of GDP bound to EF-1-alpha to GTP. The polypeptide is Elongation factor 1-beta (Oryza sativa subsp. japonica (Rice)).